The chain runs to 496 residues: MASSVLEMIKEEVTCPICLELLKEPVSADCNHSFCRACITLNYESNRNTDGKGNCPVCRVPYPFGNLRPNLHVANIVERLKGFKSIPEEEQKVNICAQHGEKLRLFCRKDMMVICWLCERSQEHRGHQTALIEEVDQEYKEKLQGALWKLMKKAKICDEWQDDLQLQRVDWENQIQINVENVQRQFKGLRDLLDSKENEELQKLKKEKKEVMEKLEESENELEDQTELVRDLISDVEHHLELSTLEMLQGANCVLRRSQSLSLQQPQTVPQKRKRTFQAPDLKGMLQVYQGLMDIQQYWVHMTLHARNNAVIAINKEKRQIQYRSYNTVPVSEIYHLGVLGYPALSSGKHYWEVDISRSDAWLLGLNDGKCAQPQLHSKEEMGIKKNLHSQIKQNVLFQPKCGYWVIGMKNPSVYKAFDECSITHNSSILVISLPDRPSRVGVFLDRKAGTLSFYDVSNCGALIYRFYDPAFPVEVYPYFNPMKCSEPMTICGPPS.

Residues 15–59 form an RING-type zinc finger; it reads CPICLELLKEPVSADCNHSFCRACITLNYESNRNTDGKGNCPVCR. A B box-type zinc finger spans residues 91 to 132; the sequence is QKVNICAQHGEKLRLFCRKDMMVICWLCERSQEHRGHQTALI. Zn(2+) is bound by residues cysteine 96, histidine 99, cysteine 118, and histidine 124. The stretch at 173–239 forms a coiled coil; the sequence is NQIQINVENV…RDLISDVEHH (67 aa). The segment at 205-210 is highly hydrophilic; sequence KKEKKE. The short motif at 268 to 276 is the Nuclear localization signal element; that stretch reads TVPQKRKRT. In terms of domain architecture, B30.2/SPRY spans 281–496; sequence DLKGMLQVYQ…EPMTICGPPS (216 aa).

Homomultimer. Interacts with NR2C2/TAK1, TAB2 and TAB3. Does not interact with NLRP3, NLRC4 or TAB1. As to expression, highly expressed in spleen and lymph nodes (at protein level).

It localises to the cytoplasm. The protein localises to the nucleus. Its function is as follows. Trans-acting factor that regulates gene expression of interleukin 2 receptor alpha chain. May affect IL2R-alpha expression through cis-acting negative regulatory elements or through competition with proteins that bind to enhancer or activator sequences. Negatively regulates Toll-like receptor (TLR)-mediated activation of NFKB by promoting degradation of TAB2 and TAB3 and preventing TRAF6 autoubiquitination. Negatively regulates production of reactive oxygen species (ROS) which inhibits activation of the NLRP3 inflammasome complex. This, in turn, regulates activation of CASP1 and subsequent cleavage of IL1B and IL18. No activity detected against a range of retroviruses including a number of lentiviruses, gammaretroviruses and betaretroviruses. The chain is Tripartite motif-containing protein 30A (Trim30a) from Mus musculus (Mouse).